Reading from the N-terminus, the 145-residue chain is ATP synthase epsilon chain (145 aa).

The segment at 100 to 123 is disordered; the sequence is RAQRAKQRAEDAIKTASEKHDSDE. Basic and acidic residues predominate over residues 106–123; it reads QRAEDAIKTASEKHDSDE.

Belongs to the ATPase epsilon chain family. F-type ATPases have 2 components, CF(1) - the catalytic core - and CF(0) - the membrane proton channel. CF(1) has five subunits: alpha(3), beta(3), gamma(1), delta(1), epsilon(1). CF(0) has three main subunits: a, b and c.

The protein localises to the cell membrane. Its function is as follows. Produces ATP from ADP in the presence of a proton gradient across the membrane. This is ATP synthase epsilon chain from Latilactobacillus sakei subsp. sakei (strain 23K) (Lactobacillus sakei subsp. sakei).